The following is a 299-amino-acid chain: MHVVILGSAAGGGVPQWNCRCSICSLAWAGDSRVRPRTQSSIAVSPDGERWLLLNASPDIRQQIQANPQMHPREGLRHSPIHAVLLTNGDVDHVAGLLTLREGQPFTLYATPGILASVSDNRVFDVMAAEVVKRQTIALNETFEPVPGLSVTLFSVPGKVPLWLEDASMEIGAETETTVGTMIEAGGKRLAYIPGCARVTEDLKARIAGADALLFDGTVLEDDDMIRAGVGTKTGWRMGHIQMNGETGSIASLADVEIGRRVFVHINNTNPVLIEDSSERASVEARGWTVAHDGLTLDL.

Belongs to the PqqB family.

It participates in cofactor biosynthesis; pyrroloquinoline quinone biosynthesis. Its function is as follows. May be involved in the transport of PQQ or its precursor to the periplasm. The chain is Coenzyme PQQ synthesis protein B from Methylorubrum extorquens (strain PA1) (Methylobacterium extorquens).